Here is a 202-residue protein sequence, read N- to C-terminus: dITP/XTP pyrophosphatase (202 aa).

9-14 (TGNKGK) lines the substrate pocket. Residue Asp-73 is the Proton acceptor of the active site. Asp-73 contributes to the Mg(2+) binding site. Substrate-binding positions include Ser-74, 158 to 161 (FGYD), Lys-181, and 186 to 187 (HR).

The protein belongs to the HAM1 NTPase family. In terms of assembly, homodimer. Requires Mg(2+) as cofactor.

It carries out the reaction XTP + H2O = XMP + diphosphate + H(+). It catalyses the reaction dITP + H2O = dIMP + diphosphate + H(+). The catalysed reaction is ITP + H2O = IMP + diphosphate + H(+). Its function is as follows. Pyrophosphatase that catalyzes the hydrolysis of nucleoside triphosphates to their monophosphate derivatives, with a high preference for the non-canonical purine nucleotides XTP (xanthosine triphosphate), dITP (deoxyinosine triphosphate) and ITP. Seems to function as a house-cleaning enzyme that removes non-canonical purine nucleotides from the nucleotide pool, thus preventing their incorporation into DNA/RNA and avoiding chromosomal lesions. The protein is dITP/XTP pyrophosphatase of Lactobacillus acidophilus (strain ATCC 700396 / NCK56 / N2 / NCFM).